Here is a 175-residue protein sequence, read N- to C-terminus: MGRTLENKKSIVAELQETLSQSQLTLVIDYKGLTVAEITDLRKRLRPTGTLCKVTKNAFMRIAVDGNQTWQPLQSFCQETSAFLLVKDDLGGAIKAYQDFQKATKKTELRGGVMEGRSLNADQVKAIGDLPSKDQLMAQIAGAINGVATKLAVGINQVPTSLARGIKAVSEKEAA.

The protein belongs to the universal ribosomal protein uL10 family. In terms of assembly, part of the ribosomal stalk of the 50S ribosomal subunit. The N-terminus interacts with L11 and the large rRNA to form the base of the stalk. The C-terminus forms an elongated spine to which L12 dimers bind in a sequential fashion forming a multimeric L10(L12)X complex.

Functionally, forms part of the ribosomal stalk, playing a central role in the interaction of the ribosome with GTP-bound translation factors. The chain is Large ribosomal subunit protein uL10 from Cyanothece sp. (strain PCC 7425 / ATCC 29141).